The sequence spans 253 residues: DNA repair protein RecO (253 aa).

The protein belongs to the RecO family.

Functionally, involved in DNA repair and RecF pathway recombination. This chain is DNA repair protein RecO, found in Dehalococcoides mccartyi (strain CBDB1).